The primary structure comprises 189 residues: MRCPFCRGDDSRVVDSREVEDGQAIRRRRSCSGCGRRFTTIEELVLSVVKRSGVTEPFSREKVVRGVARACQGRPVEEDALQQLAHQVEDTVRSLGVSELPSHEVGLAILGPLRELDEVAYLRFASVYRAFSSVEDFEKEIADLRSLRGAARLPEGPEAAQGGPESKAGNGQAAGSGDPEGVKAEKSSE.

Residues 3–34 (CPFCRGDDSRVVDSREVEDGQAIRRRRSCSGC) fold into a zinc finger. The region spanning 46 to 136 (LSVVKRSGVT…VYRAFSSVED (91 aa)) is the ATP-cone domain. The disordered stretch occupies residues 152 to 189 (RLPEGPEAAQGGPESKAGNGQAAGSGDPEGVKAEKSSE). Positions 180–189 (EGVKAEKSSE) are enriched in basic and acidic residues.

Belongs to the NrdR family. Zn(2+) serves as cofactor.

Functionally, negatively regulates transcription of bacterial ribonucleotide reductase nrd genes and operons by binding to NrdR-boxes. The chain is Transcriptional repressor NrdR from Saccharopolyspora erythraea (strain ATCC 11635 / DSM 40517 / JCM 4748 / NBRC 13426 / NCIMB 8594 / NRRL 2338).